Here is a 251-residue protein sequence, read N- to C-terminus: Hydroxyacylglutathione hydrolase (251 aa).

Histidine 53, histidine 55, aspartate 57, histidine 58, histidine 110, aspartate 127, and histidine 165 together coordinate Zn(2+).

The protein belongs to the metallo-beta-lactamase superfamily. Glyoxalase II family. In terms of assembly, monomer. It depends on Zn(2+) as a cofactor.

The enzyme catalyses an S-(2-hydroxyacyl)glutathione + H2O = a 2-hydroxy carboxylate + glutathione + H(+). It functions in the pathway secondary metabolite metabolism; methylglyoxal degradation; (R)-lactate from methylglyoxal: step 2/2. Thiolesterase that catalyzes the hydrolysis of S-D-lactoyl-glutathione to form glutathione and D-lactic acid. The protein is Hydroxyacylglutathione hydrolase of Yersinia enterocolitica serotype O:8 / biotype 1B (strain NCTC 13174 / 8081).